The chain runs to 226 residues: Ribonuclease 3 (226 aa).

Positions 6–128 (INRLQRKLGY…LIGGVFLDSD (123 aa)) constitute an RNase III domain. Glu41 lines the Mg(2+) pocket. The active site involves Asp45. Positions 114 and 117 each coordinate Mg(2+). Glu117 is an active-site residue. The 71-residue stretch at 155–225 (DPKTRLQEYL…AEQALKKLEL (71 aa)) folds into the DRBM domain.

It belongs to the ribonuclease III family. Homodimer. Requires Mg(2+) as cofactor.

It is found in the cytoplasm. The catalysed reaction is Endonucleolytic cleavage to 5'-phosphomonoester.. In terms of biological role, digests double-stranded RNA. Involved in the processing of primary rRNA transcript to yield the immediate precursors to the large and small rRNAs (23S and 16S). Processes some mRNAs, and tRNAs when they are encoded in the rRNA operon. Processes pre-crRNA and tracrRNA of type II CRISPR loci if present in the organism. This Klebsiella pneumoniae (strain 342) protein is Ribonuclease 3.